Reading from the N-terminus, the 330-residue chain is Type II restriction enzyme Cfr9I (330 aa).

Belongs to the XcyI type II restriction endonuclease family. Mg(2+) is required as a cofactor.

The catalysed reaction is Endonucleolytic cleavage of DNA to give specific double-stranded fragments with terminal 5'-phosphates.. Functionally, an E and P subtype restriction enzyme that recognizes the double-stranded sequence 5'-CCCGGG-3' and cleaves after C-1. In Citrobacter freundii, this protein is Type II restriction enzyme Cfr9I (cfr9IR).